Reading from the N-terminus, the 127-residue chain is Protein YwpG (127 aa).

As to quaternary structure, interacts with both the D1 and D2 domains of dynamin-like protein DynA.

The protein localises to the cell membrane. This is Protein YwpG (ywpG) from Bacillus subtilis (strain 168).